We begin with the raw amino-acid sequence, 474 residues long: Phosphatidylserine synthase 2 (474 aa).

The Lumenal segment spans residues 1 to 62 (MLRSDVRRVA…DDGTNTFFWR (62 aa)). A helical membrane pass occupies residues 63–83 (AHTLTVLFILTCSLGYVTLLE). Topologically, residues 84–96 (ETPQDTAYNAKRG) are cytoplasmic. A helical transmembrane segment spans residues 97-117 (IIASILVFLCFGVTQAKDGPF). Over 118–126 (SRPHPAYWR) the chain is Lumenal. Residues 127–147 (FWLCVSVVYELFLIFILFQTV) form a helical membrane-spanning segment. Topologically, residues 148-313 (HDGRQFMKFI…EWKPASSLRR (166 aa)) are cytoplasmic. Residues 314 to 334 (WLAVCGIIFVFLLAELNTFYL) form a helical membrane-spanning segment. Residue lysine 335 is a topological domain, lumenal. A helical transmembrane segment spans residues 336–356 (FVLWMPPEHYLVLLRLVFFVN). Topologically, residues 357–376 (VGGVAMREIYDFMDDLKFHK) are cytoplasmic. A helical membrane pass occupies residues 377–397 (KLGQQAWMVAAITVTEFLIVV). The Lumenal portion of the chain corresponds to 398-403 (KYDPYT). The chain crosses the membrane as a helical span at residues 404-424 (ITLPLPFYVTQCWILGIVLVL). At 425 to 474 (TWTVWRFFIRDITLRYKEIRQQKQHRNEEEKSHRNGDVNSEKDTNKHKKH) the chain is on the cytoplasmic side. The span at 448 to 468 (QHRNEEEKSHRNGDVNSEKDT) shows a compositional bias: basic and acidic residues. Residues 448–474 (QHRNEEEKSHRNGDVNSEKDTNKHKKH) form a disordered region.

The protein belongs to the phosphatidyl serine synthase family.

It is found in the endoplasmic reticulum membrane. It catalyses the reaction a 1,2-diacyl-sn-glycero-3-phosphoethanolamine + L-serine = a 1,2-diacyl-sn-glycero-3-phospho-L-serine + ethanolamine. It carries out the reaction 1-hexadecanoyl-2-(9Z-octadecenoyl)-sn-glycero-3-phosphoethanolamine + L-serine = 1-hexadecanoyl-2-(9Z-octadecenoyl)-sn-glycero-3-phospho-L-serine + ethanolamine. The enzyme catalyses 1-hexadecanoyl-2-(4Z,7Z,10Z,13Z,16Z,19Z-docosahexaenoyl)-sn-glycero-3-phosphoethanolamine + L-serine = 1-hexadecanoyl-2-(4Z,7Z,10Z,13Z,16Z,19Z-docosahexaenoyl)-sn-glycero-3-phosphoserine + ethanolamine. The catalysed reaction is 1-octadecanoyl-2-(5Z,8Z,11Z,14Z)-eicosatetraenoyl-sn-glycero-3-phosphoethanolamine + L-serine = 1-octadecanoyl-2-(5Z,8Z,11Z,14Z)-eicosatetraenoyl-sn-glycero-3-phosphoserine + ethanolamine. It catalyses the reaction 1-octadecanoyl-2-(4Z,7Z,10Z,13Z,16Z,19Z-docosahexaenoyl)-sn-glycero-3-phosphoethanolamine + L-serine = 1-octadecanoyl-2-(4Z,7Z,10Z,13Z,16Z,19Z-docosahexaenoyl)-sn-glycero-3-phosphoserine + ethanolamine. It carries out the reaction 1-(1Z-octadecenyl)-2-(4Z,7Z,10Z,13Z,16Z,19Z-docosahexaenoyl)-sn-glycero-3-phosphoethanolamine + L-serine = 1-(1Z-octadecenyl)-2-(4Z,7Z,10Z,13Z,16Z,19Z-docosahexaenoyl)-sn-glycero-3-phospho-L-serine + ethanolamine. The enzyme catalyses 1-octadecanoyl-2-(9Z-octadecenoyl)-sn-glycero-3-phosphoethanolamine + L-serine = 1-octadecanoyl-2-(9Z-octadecenoyl)-sn-glycero-3-phospho-L-serine + ethanolamine. The catalysed reaction is 1-(1Z-octadecenyl)-2-(9Z-octadecenoyl)-sn-glycero-3-phosphoethanolamine + L-serine = 1-(1Z-octadecenyl)-2-(9Z-octadecenoyl)-sn-glycero-3-phospho-L-serine + ethanolamine. It catalyses the reaction 1-(1Z-octadecenyl)-2-(5Z,8Z,11Z,14Z- eicosatetraenoyl)-sn-glycero-3-phosphoethanolamine + L-serine = 1-(1Z-octadecenyl)-2-(5Z,8Z,11Z,14Z-eicosatetraenoyl)-sn-glycero-3-phospho-L-serine + ethanolamine. The protein operates within phospholipid metabolism; phosphatidylserine biosynthesis. Catalyzes a base-exchange reaction in which the polar head group of phosphatidylethanolamine (PE) or phosphatidylcholine (PC) is replaced by L-serine. Catalyzes the conversion of phosphatatidylethanolamine and does not act on phosphatidylcholine. Can utilize both phosphatidylethanolamine (PE) plasmalogen and diacyl PE as substrate and the latter is six times better utilized, indicating the importance of an ester linkage at the sn-1 position. Although it shows no sn-1 fatty acyl preference, exhibits significant preference towards docosahexaenoic acid (22:6n-3) compared with 18:1 or 20:4 at the sn-2 position. This Xenopus tropicalis (Western clawed frog) protein is Phosphatidylserine synthase 2 (ptdss2).